The following is a 445-amino-acid chain: GTPase Der (445 aa).

2 EngA-type G domains span residues 3 to 167 (PVIA…YAGQ) and 180 to 353 (IKIA…AAAM). Residues 9-16 (GRPNVGKS), 56-60 (DTGGF), 119-122 (NKAE), 186-193 (GRPNVGKS), 233-237 (DTAGL), and 298-301 (NKWD) each bind GTP. Residues 354 to 438 (AKLPTPKLTR…PLRIEFRSSN (85 aa)) enclose the KH-like domain.

The protein belongs to the TRAFAC class TrmE-Era-EngA-EngB-Septin-like GTPase superfamily. EngA (Der) GTPase family. Associates with the 50S ribosomal subunit.

Its function is as follows. GTPase that plays an essential role in the late steps of ribosome biogenesis. The sequence is that of GTPase Der from Burkholderia lata (strain ATCC 17760 / DSM 23089 / LMG 22485 / NCIMB 9086 / R18194 / 383).